The sequence spans 788 residues: Ribonucleoside-diphosphate reductase subunit alpha (788 aa).

The ATP-cone domain occupies 2–92; the sequence is ITVVKRNGRI…LYDLYHKVSG (91 aa). ATP is bound by residues lysine 6, 12–18, and threonine 52; that span reads EPLDITK. Position 200 (threonine 200) interacts with GDP. A disulfide bond links cysteine 216 and cysteine 497. Residues 223–225 and arginine 253 each bind dTTP; that span reads DNI. Residue asparagine 424 participates in GDP binding. Asparagine 424 functions as the Proton acceptor in the catalytic mechanism. Cysteine 426 functions as the Cysteine radical intermediate in the catalytic mechanism. Residues glutamate 428 and 661 to 663 contribute to the GDP site; that span reads SSI. Glutamate 428 functions as the Proton acceptor in the catalytic mechanism.

Belongs to the ribonucleoside diphosphate reductase large chain family. Tetramer of two alpha and two beta subunits.

The catalysed reaction is a 2'-deoxyribonucleoside 5'-diphosphate + [thioredoxin]-disulfide + H2O = a ribonucleoside 5'-diphosphate + [thioredoxin]-dithiol. With respect to regulation, under complex allosteric control mediated by deoxynucleoside triphosphates and ATP binding to separate specificity and activation sites on the alpha subunit. The type of nucleotide bound at the specificity site determines substrate preference. It seems probable that ATP makes the enzyme reduce CDP and UDP, dGTP favors ADP reduction and dTTP favors GDP reduction. Stimulated by ATP and inhibited by dATP binding to the activity site. Its function is as follows. Provides the precursors necessary for DNA synthesis. Catalyzes the biosynthesis of deoxyribonucleotides from the corresponding ribonucleotides. This is Ribonucleoside-diphosphate reductase subunit alpha (nrdA) from Helicobacter pylori (strain J99 / ATCC 700824) (Campylobacter pylori J99).